A 189-amino-acid chain; its full sequence is MPRPENPIQLAVIGAAHGTRGEVRVKTFTGDPLAIADYGLLYDEQGKAYEILEARVAKTVVIVRFKGVNDRNAAEALNGTELFIDRSQLPDEELDEDEFFQTDLIGLEAVDGDGKSYGVVSAIFDFGGGDLIELSEKGKRPMLIPFTEAAVPEIDFDKGIIKVEPHAAGLIADEHDNPPHESGKKPKKP.

The PRC barrel domain occupies 95-169 (DEDEFFQTDL…IIKVEPHAAG (75 aa)). The disordered stretch occupies residues 168–189 (AGLIADEHDNPPHESGKKPKKP). Residues 172 to 189 (ADEHDNPPHESGKKPKKP) are compositionally biased toward basic and acidic residues.

It belongs to the RimM family. Binds ribosomal protein uS19.

It is found in the cytoplasm. Functionally, an accessory protein needed during the final step in the assembly of 30S ribosomal subunit, possibly for assembly of the head region. Essential for efficient processing of 16S rRNA. May be needed both before and after RbfA during the maturation of 16S rRNA. It has affinity for free ribosomal 30S subunits but not for 70S ribosomes. This chain is Ribosome maturation factor RimM, found in Brucella abortus (strain S19).